We begin with the raw amino-acid sequence, 208 residues long: MKNDNLKEQYRINERIRVREVRLVGDNIETGVYPIAQALKIAEEQGMDLVEISPNAAPPVCRVIDYQKFLYQQKKRQKEQKAKSVKVVVKEIRFGPQTDDHDYNFKLKHAKGFLEEGSKVKAYVFFKGRSILFKEQGEVLLLRFANDLEDYGKVEQLPVLEGKRMIIMLTPKKAGTGSAPAAAAAPKVVKKVITTPKPKSEGDKKTEE.

It belongs to the IF-3 family. Monomer.

It is found in the cytoplasm. IF-3 binds to the 30S ribosomal subunit and shifts the equilibrium between 70S ribosomes and their 50S and 30S subunits in favor of the free subunits, thus enhancing the availability of 30S subunits on which protein synthesis initiation begins. The sequence is that of Translation initiation factor IF-3 from Parabacteroides distasonis (strain ATCC 8503 / DSM 20701 / CIP 104284 / JCM 5825 / NCTC 11152).